The following is a 429-amino-acid chain: UDP-N-acetylglucosamine 1-carboxyvinyltransferase (429 aa).

22–23 (KN) is a phosphoenolpyruvate binding site. Residue Arg-93 coordinates UDP-N-acetyl-alpha-D-glucosamine. Cys-117 serves as the catalytic Proton donor. Residue Cys-117 is modified to 2-(S-cysteinyl)pyruvic acid O-phosphothioketal. Residues 122–126 (RPVDQ), Asp-313, and Ile-335 contribute to the UDP-N-acetyl-alpha-D-glucosamine site.

Belongs to the EPSP synthase family. MurA subfamily.

It localises to the cytoplasm. It catalyses the reaction phosphoenolpyruvate + UDP-N-acetyl-alpha-D-glucosamine = UDP-N-acetyl-3-O-(1-carboxyvinyl)-alpha-D-glucosamine + phosphate. Its pathway is cell wall biogenesis; peptidoglycan biosynthesis. Its function is as follows. Cell wall formation. Adds enolpyruvyl to UDP-N-acetylglucosamine. The polypeptide is UDP-N-acetylglucosamine 1-carboxyvinyltransferase (Variovorax paradoxus (strain S110)).